Reading from the N-terminus, the 121-residue chain is Large ribosomal subunit protein bL12 (121 aa).

The protein belongs to the bacterial ribosomal protein bL12 family. In terms of assembly, homodimer. Part of the ribosomal stalk of the 50S ribosomal subunit. Forms a multimeric L10(L12)X complex, where L10 forms an elongated spine to which 2 to 4 L12 dimers bind in a sequential fashion. Binds GTP-bound translation factors.

Functionally, forms part of the ribosomal stalk which helps the ribosome interact with GTP-bound translation factors. Is thus essential for accurate translation. In Anoxybacillus flavithermus (strain DSM 21510 / WK1), this protein is Large ribosomal subunit protein bL12.